Reading from the N-terminus, the 95-residue chain is Transcription and mRNA export factor ENY2-1 (95 aa).

The protein belongs to the ENY2 family. Component of the nuclear pore complex (NPC)-associated TREX-2 complex (transcription and export complex 2). Component of the SAGA transcription coactivator-HAT complex. Within the SAGA complex, participates in a subcomplex of SAGA called the DUB module (deubiquitination module).

The protein localises to the nucleus. It is found in the nucleoplasm. Functionally, involved in mRNA export coupled transcription activation by association with both the TREX-2 and the SAGA complexes. The transcription regulatory histone acetylation (HAT) complex SAGA is a multiprotein complex that activates transcription by remodeling chromatin and mediating histone acetylation and deubiquitination. Within the SAGA complex, participates in a subcomplex that specifically deubiquitinates histones. The SAGA complex is recruited to specific gene promoters by activators, where it is required for transcription. The TREX-2 complex functions in docking export-competent ribonucleoprotein particles (mRNPs) to the nuclear entrance of the nuclear pore complex (nuclear basket). TREX-2 participates in mRNA export and accurate chromatin positioning in the nucleus by tethering genes to the nuclear periphery. The polypeptide is Transcription and mRNA export factor ENY2-1 (eny2-1) (Salmo salar (Atlantic salmon)).